The chain runs to 121 residues: Large ribosomal subunit protein eL8 (121 aa).

This sequence belongs to the eukaryotic ribosomal protein eL8 family. Part of the 50S ribosomal subunit. Probably part of the RNase P complex.

The protein localises to the cytoplasm. Multifunctional RNA-binding protein that recognizes the K-turn motif in ribosomal RNA, the RNA component of RNase P, box H/ACA, box C/D and box C'/D' sRNAs. This chain is Large ribosomal subunit protein eL8, found in Thermoplasma acidophilum (strain ATCC 25905 / DSM 1728 / JCM 9062 / NBRC 15155 / AMRC-C165).